Consider the following 269-residue polypeptide: Indole-3-glycerol phosphate synthase (269 aa).

This sequence belongs to the TrpC family.

The enzyme catalyses 1-(2-carboxyphenylamino)-1-deoxy-D-ribulose 5-phosphate + H(+) = (1S,2R)-1-C-(indol-3-yl)glycerol 3-phosphate + CO2 + H2O. The protein operates within amino-acid biosynthesis; L-tryptophan biosynthesis; L-tryptophan from chorismate: step 4/5. This Roseiflexus sp. (strain RS-1) protein is Indole-3-glycerol phosphate synthase.